The primary structure comprises 113 residues: MNTLDFLDKKSLRDDIPEFRPGDTLNVHVKVIEGSKERVQVFKGVVIRRQGGGVRETFTVRKVSFGVGVERTFPVHSPNLAQIEVVTRGDVRRAKLYYLRDLRGKAAKIKEKR.

Belongs to the bacterial ribosomal protein bL19 family.

Its function is as follows. This protein is located at the 30S-50S ribosomal subunit interface and may play a role in the structure and function of the aminoacyl-tRNA binding site. This chain is Large ribosomal subunit protein bL19, found in Rhodococcus jostii (strain RHA1).